The primary structure comprises 191 residues: Ribosome maturation factor RimM (191 aa).

The PRC barrel domain occupies 99–172 (TDEFYQIDLI…FLVVDPVAAG (74 aa)).

The protein belongs to the RimM family. Binds ribosomal protein uS19.

The protein localises to the cytoplasm. Functionally, an accessory protein needed during the final step in the assembly of 30S ribosomal subunit, possibly for assembly of the head region. Essential for efficient processing of 16S rRNA. May be needed both before and after RbfA during the maturation of 16S rRNA. It has affinity for free ribosomal 30S subunits but not for 70S ribosomes. This chain is Ribosome maturation factor RimM, found in Bartonella bacilliformis (strain ATCC 35685 / KC583 / Herrer 020/F12,63).